A 325-amino-acid polypeptide reads, in one-letter code: Sel1-repeat-containing protein YbeQ (325 aa).

8 Sel1-like repeats span residues 26-61, 63-97, 103-130, 132-167, 168-203, 205-239, 242-275, and 280-305; these read EAQYIVGFYYNRDSAIDSPDDEKAFYWLKLAAEQGH, EAQYSLGQKYTEDKSRHKDNEQAIFWLKKAALQGH, ALGWTLDRGEAPNYKEAVVWYQIAAESG, SYAQNNLGWMYRNGNGVAKDYALAFFWYKQAALQGH, SDAQNNLADLYEDGKGVAQNKTLAAFWYLKSAQQGN, HAQFQIAWDYNAGEGVDQDYKQAMYWYLKAAAQGS, AYVNIGYMYKHGQGVEKDYQAAFEWFTKAAECND, and YNLAIMYHYGEGRPVDLRQALDLYRK.

This sequence to E.coli YbeT.

This chain is Sel1-repeat-containing protein YbeQ (ybeQ), found in Escherichia coli (strain K12).